A 505-amino-acid chain; its full sequence is Maturase K (505 aa).

It belongs to the intron maturase 2 family. MatK subfamily.

It is found in the plastid. It localises to the chloroplast. Its function is as follows. Usually encoded in the trnK tRNA gene intron. Probably assists in splicing its own and other chloroplast group II introns. In Blitum bonus-henricus (Good King Henry), this protein is Maturase K.